Reading from the N-terminus, the 813-residue chain is Enhancer of polycomb homolog 1 (813 aa).

Disordered stretches follow at residues Phe310–Phe403, Met484–Leu513, and Phe528–Ser577. Residues Lys311–Arg333 show a composition bias toward basic and acidic residues. Lys319 participates in a covalent cross-link: Glycyl lysine isopeptide (Lys-Gly) (interchain with G-Cter in SUMO2). Positions Pro346–Pro361 are enriched in low complexity. Residues Ser486 to Leu513 are compositionally biased toward polar residues. Ser538 bears the Phosphoserine mark. The span at Thr564 to Ser577 shows a compositional bias: low complexity. Lys650 participates in a covalent cross-link: Glycyl lysine isopeptide (Lys-Gly) (interchain with G-Cter in SUMO2). Residues Val779 to Thr813 form a disordered region. The span at Val788 to Lys797 shows a compositional bias: basic and acidic residues.

It belongs to the enhancer of polycomb family. Component of the NuA4 histone acetyltransferase complex which contains the catalytic subunit KAT5/TIP60 and the subunits EP400, TRRAP/PAF400, BRD8/SMAP, EPC1, DMAP1/DNMAP1, RUVBL1/TIP49, RUVBL2, ING3, actin, ACTL6A/BAF53A, MORF4L1/MRG15, MORF4L2/MRGX, MRGBP, YEATS4/GAS41, VPS72/YL1 and MEAF6. KAT5/TIP60, EPC1, and ING3 together constitute a minimal HAT complex termed Piccolo NuA4. Component of a NuA4-related complex which contains EP400, TRRAP/PAF400, SRCAP, BRD8/SMAP, EPC1, DMAP1/DNMAP1, RUVBL1/TIP49, RUVBL2, actin, ACTL6A/BAF53A, VPS72 and YEATS4/GAS41. Interacts with TRIM27. Interacts with MBTD1; interaction is direct and promotes recruitment of MBTD1 into the NuA4 histone acetyltransferase complex. In terms of tissue distribution, expressed in adult brain, heart, kidney, liver, lung, skeletal muscle and testis. Expressed in male germ cells, present in round spermatids of steps 1 to 4.

It is found in the nucleus. The protein resides in the cytoplasm. In terms of biological role, component of the NuA4 histone acetyltransferase (HAT) complex, a multiprotein complex involved in transcriptional activation of select genes principally by acetylation of nucleosomal histones H4 and H2A. The NuA4 complex plays a direct role in repair of DNA double-strand breaks (DSBs) by promoting homologous recombination (HR). The NuA4 complex is also required for spermatid development by promoting acetylation of histones: histone acetylation is required for histone replacement during the transition from round to elongating spermatids. In the NuA4 complex, EPC1 is required to recruit MBTD1 into the complex. This Mus musculus (Mouse) protein is Enhancer of polycomb homolog 1.